Here is a 388-residue protein sequence, read N- to C-terminus: MKHLHRFFSSDASGGIILIIAAALAMLMANMGATSGWYHDFLETPVQLRVGALEINKNMLLWINDALMAVFFLLIGLEVKRELMQGSLASLRQAAFPVIAAIGGMIVPALLYLAFNYSDPVTREGWAIPAATDIAFALGVLALLGSRVPLALKIFLMALAIIDDLGAIVIIALFYTSDLSIVSLGVAAFAIAVLALLNLCGVRRTGVYILVGAVLWTAVLKSGVHATLAGVIVGFFIPLKEKHGRSPAKRLEHVLHPWVAYLILPLFAFANAGVSLQGVTIDGLTSMLPLGIIAGLLIGKPLGISLFCWLALRFKLAHLPQGTTYQQIMAVGILCGIGFTMSIFIASLAFGNVDPELINWAKLGILIGSLLSAVVGYSWLRARLNAPA.

11 helical membrane passes run 14–34 (GGIILIIAAALAMLMANMGAT), 59–79 (MLLWINDALMAVFFLLIGLEV), 95–115 (AFPVIAAIGGMIVPALLYLAF), 125–145 (GWAIPAATDIAFALGVLALLG), 154–174 (IFLMALAIIDDLGAIVIIALF), 179–199 (LSIVSLGVAAFAIAVLALLNL), 219–239 (VLKSGVHATLAGVIVGFFIPL), 254–274 (VLHPWVAYLILPLFAFANAGV), 292–312 (IIAGLLIGKPLGISLFCWLAL), 328–348 (IMAVGILCGIGFTMSIFIASL), and 360–380 (WAKLGILIGSLLSAVVGYSWL).

Belongs to the NhaA Na(+)/H(+) (TC 2.A.33) antiporter family.

The protein localises to the cell inner membrane. It catalyses the reaction Na(+)(in) + 2 H(+)(out) = Na(+)(out) + 2 H(+)(in). In terms of biological role, na(+)/H(+) antiporter that extrudes sodium in exchange for external protons. The protein is Na(+)/H(+) antiporter NhaA of Salmonella choleraesuis (strain SC-B67).